The primary structure comprises 247 residues: 2,3-bisphosphoglycerate-dependent phosphoglycerate mutase (247 aa).

Residues 8–15, 21–22, Arg60, 87–90, Lys98, 114–115, and 183–184 contribute to the substrate site; these read RHGESVWN, TG, ERHY, RR, and GN. His9 functions as the Tele-phosphohistidine intermediate in the catalytic mechanism. Glu87 acts as the Proton donor/acceptor in catalysis.

Belongs to the phosphoglycerate mutase family. BPG-dependent PGAM subfamily.

It catalyses the reaction (2R)-2-phosphoglycerate = (2R)-3-phosphoglycerate. It functions in the pathway carbohydrate degradation; glycolysis; pyruvate from D-glyceraldehyde 3-phosphate: step 3/5. Its function is as follows. Catalyzes the interconversion of 2-phosphoglycerate and 3-phosphoglycerate. The chain is 2,3-bisphosphoglycerate-dependent phosphoglycerate mutase from Thermobifida fusca (strain YX).